The primary structure comprises 154 residues: Myoglobin (154 aa).

The 147-residue stretch at 2–148 (GLSDGEWQLV…FRNDMAAKYK (147 aa)) folds into the Globin domain. Ser-4 carries the post-translational modification Phosphoserine. His-65 is a binding site for nitrite. Residue His-65 participates in O2 binding. A Phosphothreonine modification is found at Thr-68. His-94 is a binding site for heme b.

Belongs to the globin family. Monomeric.

The protein resides in the cytoplasm. It localises to the sarcoplasm. The catalysed reaction is Fe(III)-heme b-[protein] + nitric oxide + H2O = Fe(II)-heme b-[protein] + nitrite + 2 H(+). The enzyme catalyses H2O2 + AH2 = A + 2 H2O. Monomeric heme protein which primary function is to store oxygen and facilitate its diffusion within muscle tissues. Reversibly binds oxygen through a pentacoordinated heme iron and enables its timely and efficient release as needed during periods of heightened demand. Depending on the oxidative conditions of tissues and cells, and in addition to its ability to bind oxygen, it also has a nitrite reductase activity whereby it regulates the production of bioactive nitric oxide. Under stress conditions, like hypoxia and anoxia, it also protects cells against reactive oxygen species thanks to its pseudoperoxidase activity. This is Myoglobin (MB) from Erythrocebus patas (Red guenon).